Here is a 255-residue protein sequence, read N- to C-terminus: Glutamate racemase (255 aa).

Residues 7–8 (DS) and 39–40 (YG) each bind substrate. Residue Cys70 is the Proton donor/acceptor of the active site. Position 71–72 (71–72 (NT)) interacts with substrate. Cys181 serves as the catalytic Proton donor/acceptor. Substrate is bound at residue 182–183 (TH).

It belongs to the aspartate/glutamate racemases family.

The enzyme catalyses L-glutamate = D-glutamate. It functions in the pathway cell wall biogenesis; peptidoglycan biosynthesis. Functionally, provides the (R)-glutamate required for cell wall biosynthesis. This Helicobacter pylori (strain Shi470) protein is Glutamate racemase.